A 295-amino-acid polypeptide reads, in one-letter code: Protease HtpX (295 aa).

Transmembrane regions (helical) follow at residues 4 to 24 (ILLF…TLSL) and 42 to 62 (QLLV…LFIS). Histidine 147 serves as a coordination point for Zn(2+). Residue glutamate 148 is part of the active site. Position 151 (histidine 151) interacts with Zn(2+). 2 helical membrane passes run 158–178 (VTLA…ARII) and 199–219 (ITTI…VMWF). Glutamate 224 is a Zn(2+) binding site.

This sequence belongs to the peptidase M48B family. The cofactor is Zn(2+).

The protein localises to the cell inner membrane. The chain is Protease HtpX from Pseudomonas syringae pv. tomato (strain ATCC BAA-871 / DC3000).